A 327-amino-acid polypeptide reads, in one-letter code: Melanoma-associated antigen B18 (327 aa).

Basic residues predominate over residues 1-19 (MPRGQKSKLRAREKRRQAR). The interval 1–85 (MPRGQKSKLR…SSDDSEDTED (85 aa)) is disordered. The span at 46-70 (MPTSPNMPMGEQSTFSHSYTSTSDQ) shows a compositional bias: polar residues. One can recognise an MAGE domain in the interval 91 to 289 (INHKVVLLVQ…DSFPTLYEAA (199 aa)).

Interacts with LNX1. In terms of tissue distribution, expressed in testis, stomach, large intestine, small intestine, spleen, lymph node, bone marrow lymphocytes and blood T-lymphocytes. Not detected in brain, heart, lung, liver or kidney (at protein level).

The protein resides in the cytoplasm. Its function is as follows. May enhance ubiquitin ligase activity of RING-type zinc finger-containing E3 ubiquitin-protein ligases. Proposed to act through recruitment and/or stabilization of the Ubl-conjugating enzyme (E2) at the E3:substrate complex. This Mus musculus (Mouse) protein is Melanoma-associated antigen B18.